Here is a 306-residue protein sequence, read N- to C-terminus: Elongation factor Ts (306 aa).

The involved in Mg(2+) ion dislocation from EF-Tu stretch occupies residues 80 to 83 (TDFV).

Belongs to the EF-Ts family.

It localises to the cytoplasm. Associates with the EF-Tu.GDP complex and induces the exchange of GDP to GTP. It remains bound to the aminoacyl-tRNA.EF-Tu.GTP complex up to the GTP hydrolysis stage on the ribosome. This Leptothrix cholodnii (strain ATCC 51168 / LMG 8142 / SP-6) (Leptothrix discophora (strain SP-6)) protein is Elongation factor Ts.